A 901-amino-acid chain; its full sequence is Aconitate hydratase A (901 aa).

[4Fe-4S] cluster-binding residues include Cys443, Cys509, and Cys512.

This sequence belongs to the aconitase/IPM isomerase family. As to quaternary structure, monomer. The cofactor is [4Fe-4S] cluster.

It catalyses the reaction citrate = D-threo-isocitrate. The enzyme catalyses (2S,3R)-3-hydroxybutane-1,2,3-tricarboxylate = 2-methyl-cis-aconitate + H2O. The protein operates within carbohydrate metabolism; tricarboxylic acid cycle; isocitrate from oxaloacetate: step 2/2. Its pathway is organic acid metabolism; propanoate degradation. Functionally, involved in the catabolism of short chain fatty acids (SCFA) via the tricarboxylic acid (TCA)(acetyl degradation route) and probably the 2-methylcitrate cycle I (propionate degradation route). Catalyzes the reversible isomerization of citrate to isocitrate via cis-aconitate. Could catalyze the hydration of 2-methyl-cis-aconitate to yield (2R,3S)-2-methylisocitrate. The apo form of AcnA functions as a RNA-binding regulatory protein. In Staphylococcus epidermidis (strain ATCC 35984 / DSM 28319 / BCRC 17069 / CCUG 31568 / BM 3577 / RP62A), this protein is Aconitate hydratase A (acnA).